Consider the following 341-residue polypeptide: D-erythrose-4-phosphate dehydrogenase (341 aa).

14-15 (RI) serves as a coordination point for NAD(+). Substrate contacts are provided by residues 156–158 (SCT), Arg-202, 215–216 (TR), and Arg-238. The active-site Nucleophile is Cys-157. Asn-320 lines the NAD(+) pocket.

This sequence belongs to the glyceraldehyde-3-phosphate dehydrogenase family. Epd subfamily. As to quaternary structure, homotetramer.

Its subcellular location is the cytoplasm. The catalysed reaction is D-erythrose 4-phosphate + NAD(+) + H2O = 4-phospho-D-erythronate + NADH + 2 H(+). It functions in the pathway cofactor biosynthesis; pyridoxine 5'-phosphate biosynthesis; pyridoxine 5'-phosphate from D-erythrose 4-phosphate: step 1/5. In terms of biological role, catalyzes the NAD-dependent conversion of D-erythrose 4-phosphate to 4-phosphoerythronate. The sequence is that of D-erythrose-4-phosphate dehydrogenase from Idiomarina loihiensis (strain ATCC BAA-735 / DSM 15497 / L2-TR).